The sequence spans 250 residues: 5'-nucleotidase SurE (250 aa).

Residues Asp-8, Asp-9, Ser-39, and Asn-95 each contribute to the a divalent metal cation site.

This sequence belongs to the SurE nucleotidase family. A divalent metal cation is required as a cofactor.

It is found in the cytoplasm. The enzyme catalyses a ribonucleoside 5'-phosphate + H2O = a ribonucleoside + phosphate. Functionally, nucleotidase that shows phosphatase activity on nucleoside 5'-monophosphates. In Cupriavidus pinatubonensis (strain JMP 134 / LMG 1197) (Cupriavidus necator (strain JMP 134)), this protein is 5'-nucleotidase SurE.